The following is a 125-amino-acid chain: Small ribosomal subunit protein uS12m (125 aa).

Disordered stretches follow at residues Met1–Arg50 and Gly106–Ile125. The span at His10–Ala23 shows a compositional bias: basic and acidic residues.

This sequence belongs to the universal ribosomal protein uS12 family.

The protein resides in the mitochondrion. In terms of biological role, protein S12 is involved in the translation initiation step. The chain is Small ribosomal subunit protein uS12m (RPS12) from Magnolia soulangeana (Saucer magnolia).